The primary structure comprises 551 residues: Nucleobase-ascorbate transporter 3 (551 aa).

The segment at 1–30 (MVETGHHHQHPPAPAAAGHPPVPSMAMARN) is disordered. A run of 12 helical transmembrane segments spans residues 56–76 (ETVV…VLIA), 92–111 (RVIQ…QTLI), 117–136 (TVMG…IRDY), 158–178 (SLII…WGNL), 179–199 (IRIF…LGLF), 202–222 (GFPL…LLII), 242–262 (ALLV…VSGA), 306–326 (VFGM…VFFA), 390–410 (FFMI…SIPL), 412–432 (IFAG…ISFI), 442–462 (NMYV…YFLA), and 481–501 (DILN…ATIL).

This sequence belongs to the nucleobase:cation symporter-2 (NCS2) (TC 2.A.40) family. Expressed in the apical meristem 4 days after imbibition (DAI). Expressed in the major veins of rosette leaves and pedicels. Expressed in the root central cylinder, root meristems, root tips and lateral root primordia.

The protein localises to the membrane. The chain is Nucleobase-ascorbate transporter 3 (NAT3) from Arabidopsis thaliana (Mouse-ear cress).